The sequence spans 116 residues: Protein Wnt-5b (116 aa).

The O-palmitoleoyl serine; by PORCN moiety is linked to residue serine 1. 2 N-linked (GlcNAc...) asparagine glycosylation sites follow: asparagine 69 and asparagine 83. The cysteines at positions 82 and 97 are disulfide-linked.

It belongs to the Wnt family. Post-translationally, palmitoleoylation is required for efficient binding to frizzled receptors. Depalmitoleoylation leads to Wnt signaling pathway inhibition.

The protein localises to the secreted. It localises to the extracellular space. The protein resides in the extracellular matrix. Its function is as follows. Ligand for members of the frizzled family of seven transmembrane receptors. Probable developmental protein. May be a signaling molecule which affects the development of discrete regions of tissues. Is likely to signal over only few cell diameters. This Plethodon jordani (Red-cheeked salamander) protein is Protein Wnt-5b (WNT-5B).